Consider the following 207-residue polypeptide: Zinc finger protein JAGGED-like (207 aa).

A compositionally biased stretch (low complexity) spans 1 to 16 (MRADENNTLDLNNLPD). The tract at residues 1-20 (MRADENNTLDLNNLPDDPSR) is disordered. A C2H2-type zinc finger spans residues 50 to 72 (YECRFCSLKFFKSQALGGHMNRH).

As to expression, expressed in the emerging leaf, stamen and carpel primordia. Not expressed in the apical shoot meristem (SAM).

Its subcellular location is the nucleus. Acts with JAG to promote growth and patterning in stamens and carpels. Promotes the growth of the abaxial and adaxial sides of floral organs. Promotes the growth of the pollen-bearing microsporangia in anthers, the carpel walls of the gynoecium and the establishment of the correct number of cell layers in carpel walls. Promotes leaf blade growth and trichome development. This chain is Zinc finger protein JAGGED-like (JGL), found in Arabidopsis thaliana (Mouse-ear cress).